Here is a 307-residue protein sequence, read N- to C-terminus: Ribosomal RNA small subunit methyltransferase H (307 aa).

S-adenosyl-L-methionine-binding positions include 32–34 (GGH), aspartate 52, phenylalanine 78, aspartate 99, and glutamine 106.

It belongs to the methyltransferase superfamily. RsmH family.

It is found in the cytoplasm. It carries out the reaction cytidine(1402) in 16S rRNA + S-adenosyl-L-methionine = N(4)-methylcytidine(1402) in 16S rRNA + S-adenosyl-L-homocysteine + H(+). Its function is as follows. Specifically methylates the N4 position of cytidine in position 1402 (C1402) of 16S rRNA. This chain is Ribosomal RNA small subunit methyltransferase H, found in Acinetobacter baumannii (strain AB0057).